Consider the following 384-residue polypeptide: Inactive lipoate--protein ligase 2 (384 aa).

A BPL/LPL catalytic domain is found at N79 to N303.

Its subcellular location is the mitochondrion. It localises to the plastid. The protein resides in the apicoplast. Functionally, in the mitochondrion and together with LipL1, involved in the lipoylation of the E2 component of the branched chain alpha-ketoacid dehydrogenase complex BCKDH-E2/BCDH and the E2 component of the alpha -ketoglutarate dehydrogenase complex KDH. LipL1 is responsible for catalysing the activation of lipoate, forming lipoyl-AMP while LipL2 is required but is not capable of catalyzing this reaction. Although its role is unclear, it may catalyze the transfer of lipoyl groups from lipoyl-AMP to BCDH and KDH or act as an effector protein. This chain is Inactive lipoate--protein ligase 2, found in Plasmodium falciparum (isolate 3D7).